The sequence spans 648 residues: Biosynthetic arginine decarboxylase (648 aa).

At Lys-109 the chain carries N6-(pyridoxal phosphate)lysine. 291 to 301 (IDVGGGLGIDF) serves as a coordination point for substrate.

Belongs to the Orn/Lys/Arg decarboxylase class-II family. SpeA subfamily. Mg(2+) serves as cofactor. Requires pyridoxal 5'-phosphate as cofactor.

It catalyses the reaction L-arginine + H(+) = agmatine + CO2. Its pathway is amine and polyamine biosynthesis; agmatine biosynthesis; agmatine from L-arginine: step 1/1. Catalyzes the biosynthesis of agmatine from arginine. This Prochlorococcus marinus (strain MIT 9312) protein is Biosynthetic arginine decarboxylase.